Reading from the N-terminus, the 272-residue chain is Ribosomal RNA small subunit methyltransferase A (272 aa).

Asparagine 20, leucine 22, glycine 47, glutamate 68, aspartate 93, and asparagine 114 together coordinate S-adenosyl-L-methionine.

This sequence belongs to the class I-like SAM-binding methyltransferase superfamily. rRNA adenine N(6)-methyltransferase family. RsmA subfamily.

The protein localises to the cytoplasm. The catalysed reaction is adenosine(1518)/adenosine(1519) in 16S rRNA + 4 S-adenosyl-L-methionine = N(6)-dimethyladenosine(1518)/N(6)-dimethyladenosine(1519) in 16S rRNA + 4 S-adenosyl-L-homocysteine + 4 H(+). Functionally, specifically dimethylates two adjacent adenosines (A1518 and A1519) in the loop of a conserved hairpin near the 3'-end of 16S rRNA in the 30S particle. May play a critical role in biogenesis of 30S subunits. This chain is Ribosomal RNA small subunit methyltransferase A, found in Aliivibrio fischeri (strain ATCC 700601 / ES114) (Vibrio fischeri).